The primary structure comprises 417 residues: Glutamyl-tRNA reductase (417 aa).

Residues 49 to 52 (TCNR), Ser107, 112 to 114 (EEQ), and Gln118 contribute to the substrate site. The active-site Nucleophile is Cys50. 187–192 (GTGEVS) is a binding site for NADP(+).

It belongs to the glutamyl-tRNA reductase family. As to quaternary structure, homodimer.

The enzyme catalyses (S)-4-amino-5-oxopentanoate + tRNA(Glu) + NADP(+) = L-glutamyl-tRNA(Glu) + NADPH + H(+). The protein operates within porphyrin-containing compound metabolism; protoporphyrin-IX biosynthesis; 5-aminolevulinate from L-glutamyl-tRNA(Glu): step 1/2. Catalyzes the NADPH-dependent reduction of glutamyl-tRNA(Glu) to glutamate 1-semialdehyde (GSA). This is Glutamyl-tRNA reductase from Cenarchaeum symbiosum (strain A).